Consider the following 676-residue polypeptide: Beta-taxilin (676 aa).

Disordered stretches follow at residues 1 to 55 (MEND…DISE) and 71 to 131 (AASL…EQKL). Composition is skewed to polar residues over residues 8–25 (EKQQQVTTSPTQDNQGQS) and 34–45 (QPLSPTNQTSAQ). Residues 75 to 92 (VEKEGTTAETDKPEKEDV) are compositionally biased toward basic and acidic residues. Residues 93 to 105 (GSMEDAECEDVNE) are compositionally biased toward acidic residues. The segment covering 106 to 131 (ESEKDKPAPGDASRAKEPSASKEQKL) has biased composition (basic and acidic residues). Positions 157–461 (EEKLDLLFKK…LYRKIKQAQL (305 aa)) form a coiled coil. Residues 464-486 (EVNGNDILEEDDDANTNPSSSEQ) are disordered.

Belongs to the taxilin family. In terms of tissue distribution, specifically expressed in skeletal and cardiac muscle.

Its subcellular location is the cytoplasm. Promotes neurite-outgrowth. May be involved in intracellular vesicle traffic. This is Beta-taxilin (TXLNB) from Gallus gallus (Chicken).